Reading from the N-terminus, the 487-residue chain is Glutamate--tRNA ligase (487 aa).

A 'HIGH' region motif is present at residues 10-20 (PSPTGYMHVGN). The 'KMSKS' region motif lies at 251–255 (KLSKR). Lys-254 contributes to the ATP binding site.

The protein belongs to the class-I aminoacyl-tRNA synthetase family. Glutamate--tRNA ligase type 1 subfamily. As to quaternary structure, monomer.

Its subcellular location is the cytoplasm. It catalyses the reaction tRNA(Glu) + L-glutamate + ATP = L-glutamyl-tRNA(Glu) + AMP + diphosphate. Functionally, catalyzes the attachment of glutamate to tRNA(Glu) in a two-step reaction: glutamate is first activated by ATP to form Glu-AMP and then transferred to the acceptor end of tRNA(Glu). This is Glutamate--tRNA ligase from Clostridium kluyveri (strain ATCC 8527 / DSM 555 / NBRC 12016 / NCIMB 10680 / K1).